The sequence spans 147 residues: Hemoglobin subunit epsilon (147 aa).

Residues histidine 3 to histidine 147 form the Globin domain. Phosphoserine occurs at positions 14 and 51. Heme b contacts are provided by histidine 64 and histidine 93.

The protein belongs to the globin family. Heterotetramer of two alpha chains and two epsilon chains in early embryonic hemoglobin Gower-2; two zeta chains and two epsilon chains in early embryonic hemoglobin Gower-1. As to expression, red blood cells.

The epsilon chain is a beta-type chain of early mammalian embryonic hemoglobin. The polypeptide is Hemoglobin subunit epsilon (HBE1) (Saimiri boliviensis boliviensis (Bolivian squirrel monkey)).